A 331-amino-acid chain; its full sequence is GATA transcription factor 12 (331 aa).

Disordered regions lie at residues 30–49 and 105–138; these read ENDV…SSNF and SGFK…SVPA. Positions 34 to 47 are enriched in low complexity; sequence VADSTTTTTITDSS. Residues 116-134 show a composition bias toward polar residues; sequence DTGSPENPNSSSPIFTTDV. The Nuclear localization signal signature appears at 139 to 146; sequence KARSKRSR. The tract at residues 174–218 is disordered; that stretch reads SSQQHLSPPTSPPLLMAPLGKKQAVDGGHRRKKDVSSPESGGAEE. A GATA-type zinc finger spans residues 215–269; it reads GAEERRCLHCATDKTPQWRTGPMGPKTLCNACGVRYKSGRLVPEYRPAASPTFVL.

It belongs to the type IV zinc-finger family. Class A subfamily. In terms of tissue distribution, expressed in the vascular cylinder of roots. Expressed in the differentiation zone of the root stele.

It is found in the nucleus. Transcriptional activator that specifically binds 5'-GATA-3' or 5'-GAT-3' motifs within gene promoters. May be involved in the regulation of some light-responsive genes. Transcription activator involved in xylem formation. Functions upstream of NAC030/VND7, a master switch of xylem vessel differentiation. This chain is GATA transcription factor 12, found in Arabidopsis thaliana (Mouse-ear cress).